Reading from the N-terminus, the 396-residue chain is Digeranylgeranylglycerophospholipid reductase (396 aa).

Residues G14, E33, C44, G45, G47, R100, A124, E162, D283, G295, and I296 each coordinate FAD. K338 and V374 together coordinate a 2,3-bis-O-(geranylgeranyl)-sn-glycerol 1-phospholipid.

This sequence belongs to the geranylgeranyl reductase family. DGGGPL reductase subfamily. The cofactor is FAD.

It carries out the reaction 2,3-bis-O-(phytanyl)-sn-glycerol 1-phosphate + 8 NADP(+) = 2,3-bis-O-(geranylgeranyl)-sn-glycerol 1-phosphate + 8 NADPH + 8 H(+). The enzyme catalyses 2,3-bis-O-(phytanyl)-sn-glycerol 1-phosphate + 8 NAD(+) = 2,3-bis-O-(geranylgeranyl)-sn-glycerol 1-phosphate + 8 NADH + 8 H(+). The catalysed reaction is a 2,3-bis-O-phytanyl-sn-glycerol 1-phospholipid + 8 A = a 2,3-bis-O-(geranylgeranyl)-sn-glycerol 1-phospholipid + 8 AH2. It catalyses the reaction CDP-2,3-bis-O-(geranylgeranyl)-sn-glycerol + 8 AH2 = CDP-2,3-bis-O-(phytanyl)-sn-glycerol + 8 A. It carries out the reaction archaetidylserine + 8 AH2 = 2,3-bis-O-phytanyl-sn-glycero-3-phospho-L-serine + 8 A. Its pathway is membrane lipid metabolism; glycerophospholipid metabolism. Is involved in the reduction of 2,3-digeranylgeranylglycerophospholipids (unsaturated archaeols) into 2,3-diphytanylglycerophospholipids (saturated archaeols) in the biosynthesis of archaeal membrane lipids. Catalyzes the formation of archaetidic acid (2,3-di-O-phytanyl-sn-glyceryl phosphate) from 2,3-di-O-geranylgeranylglyceryl phosphate (DGGGP) via the hydrogenation of each double bond of the isoprenoid chains. Is also probably able to reduce double bonds of geranyl groups in CDP-2,3-bis-O-(geranylgeranyl)-sn-glycerol and archaetidylserine, thus acting at various stages in the biosynthesis of archaeal membrane lipids. In Thermoplasma volcanium (strain ATCC 51530 / DSM 4299 / JCM 9571 / NBRC 15438 / GSS1), this protein is Digeranylgeranylglycerophospholipid reductase.